A 124-amino-acid polypeptide reads, in one-letter code: Transcription initiation factor IIA subunit 2 (124 aa).

It belongs to the TFIIA subunit 2 family. TFIIA is a heterodimer composed of the large TOA1 and the small TOA2 subunits.

The protein resides in the nucleus. Its function is as follows. TFIIA is a component of the transcription machinery of RNA polymerase II and plays an important role in transcriptional activation. TFIIA in a complex with tbp mediates transcriptional activity. The polypeptide is Transcription initiation factor IIA subunit 2 (TOA2) (Cryptococcus neoformans var. neoformans serotype D (strain JEC21 / ATCC MYA-565) (Filobasidiella neoformans)).